We begin with the raw amino-acid sequence, 447 residues long: Phosphoglucosamine mutase (447 aa).

The active-site Phosphoserine intermediate is the Ser-104. Residues Ser-104, Asp-243, Asp-245, and Asp-247 each coordinate Mg(2+). Ser-104 carries the phosphoserine modification.

The protein belongs to the phosphohexose mutase family. It depends on Mg(2+) as a cofactor. Activated by phosphorylation.

The enzyme catalyses alpha-D-glucosamine 1-phosphate = D-glucosamine 6-phosphate. In terms of biological role, catalyzes the conversion of glucosamine-6-phosphate to glucosamine-1-phosphate. In Corynebacterium glutamicum (strain ATCC 13032 / DSM 20300 / JCM 1318 / BCRC 11384 / CCUG 27702 / LMG 3730 / NBRC 12168 / NCIMB 10025 / NRRL B-2784 / 534), this protein is Phosphoglucosamine mutase.